The sequence spans 445 residues: MTELRQRVAREPEAPPEDKESESEAKADGETASDSESRVEAVTQPPSADDTPEVLNRALSNLSSRWKNWWVRGILTLAMIAFFFIIIYLGPMVLMMIVMCVQIKCFHEIITIGYNVYHSYDLPWFRTLSWYFLLCVNYFFYGETVTDYFFTLVQREEPLRILSKYHRFISFTLYLTGFCMFVLSLVKKHYRLQFYMFGWTHVTLLIVVTQSHLVIHNLFEGMIWFIVPISCVICNDIMAYMFGFFFGRTPLIKLSPKKTWEGFIGGFFATVVFGLLLSYVMSGYRCFVCPVEYNNDTNSFTVDCEPSGLFRLQEYNIPGVIQSIIGWKTVRMYPFQIHSIALSTFASLIGPFGGFFASGFKRAFKIKDFANTIPGHGGIMDRFDCQYLMATFVNVYIASFIRGPNPSKLVQQFLTLRPDQQLHIFNTLKSHLTDKGMLTAATEDK.

Over residues 1 to 39 the composition is skewed to basic and acidic residues; the sequence is MTELRQRVAREPEAPPEDKESESEAKADGETASDSESRV. The disordered stretch occupies residues 1–52; the sequence is MTELRQRVAREPEAPPEDKESESEAKADGETASDSESRVEAVTQPPSADDTP. Ser21 carries the phosphoserine modification. Thr31 is modified (phosphothreonine). Ser33, Ser35, and Ser37 each carry phosphoserine. A Phosphothreonine modification is found at Thr51. The next 6 helical transmembrane spans lie at 79 to 99, 132 to 152, 166 to 186, 213 to 233, 262 to 282, and 340 to 360; these read MIAFFFIIIYLGPMVLMMIVM, FLLCVNYFFYGETVTDYFFTL, HRFISFTLYLTGFCMFVLSLV, LVIHNLFEGMIWFIVPISCVI, GFIGGFFATVVFGLLLSYVMS, and IALSTFASLIGPFGGFFASGF.

Belongs to the CDS family. As to quaternary structure, homodimer.

The protein resides in the endoplasmic reticulum membrane. It carries out the reaction a 1,2-diacyl-sn-glycero-3-phosphate + CTP + H(+) = a CDP-1,2-diacyl-sn-glycerol + diphosphate. The enzyme catalyses 1-octadecanoyl-2-(5Z,8Z,11Z,14Z-eicosatetraenoyl)-sn-glycero-3-phosphate + CTP + H(+) = 1-octadecanoyl-2-(5Z,8Z,11Z,14Z-eicosatetraenoyl)-sn-glycero-3-cytidine-5'-diphosphate + diphosphate. The catalysed reaction is 1-octadecanoyl-2-(9Z,12Z-octadecadienoyl)-sn-glycero-3-phosphate + CTP + H(+) = 1-octadecanoyl-2-(9Z,12Z-octadecadienoyl)-sn-glycero-3-cytidine-5'-diphosphate + diphosphate. It catalyses the reaction 1-hexadecanoyl-2-(5Z,8Z,11Z,14Z-eicosatetraenoyl)-sn-glycero-3-phosphate + CTP + H(+) = 1-hexadecanoyl-2-(5Z,8Z,11Z,14Z-eicosatetraenoyl)-sn-glycero-3-cytidine-5'-diphosphate + diphosphate. It carries out the reaction 1,2-di-(5Z,8Z,11Z,14Z)-eicosatetraenoyl-sn-glycero-3-phosphate + CTP + H(+) = 1,2-di-(5Z,8Z,11Z,14Z-eicosatetraenoyl)-sn-glycero-3-cytidine-5'-diphosphate + diphosphate. The enzyme catalyses 1-octadecanoyl-2-(9Z-octadecenoyl)-sn-glycero-3-phosphate + CTP + H(+) = 1-octadecanoyl-2-(9Z-octadecenoyl)-sn-glycero-3-cytidine-5'-diphosphate + diphosphate. The catalysed reaction is 1-octadecanoyl-2-(4Z,7Z,10Z,13Z,16Z,19Z-docosahexaenoyl)-sn-glycero-3-phosphate + CTP + H(+) = 1-octadecanoyl-2-(4Z,7Z,10Z,13Z,16Z,19Z-docosahexaenoyl)-sn-glycero-3-cytidine-5'-diphosphate + diphosphate. It catalyses the reaction 1,2-di-(9Z,12Z-octadecadienoyl)-sn-glycero-3-phosphate + CTP + H(+) = 1,2-di-(9Z,12Z-octadecadienoyl)-sn-glycero-3-cytidine-5'-diphosphate + diphosphate. It carries out the reaction 1,2-di-(9Z-octadecenoyl)-sn-glycero-3-phosphate + CTP + H(+) = 1,2-di-(9Z-octadecenoyl)-sn-glycero-3-cytidine-5'-diphosphate + diphosphate. It participates in phospholipid metabolism; CDP-diacylglycerol biosynthesis; CDP-diacylglycerol from sn-glycerol 3-phosphate: step 3/3. Catalyzes the conversion of phosphatidic acid (PA) to CDP-diacylglycerol (CDP-DAG), an essential intermediate in the synthesis of phosphatidylglycerol, cardiolipin and phosphatidylinositol. Exhibits specificity for the nature of the acyl chains at the sn-1 and sn-2 positions in the substrate, PA and the preferred acyl chain composition is 1-stearoyl-2-arachidonoyl-sn-phosphatidic acid. Plays an important role in regulating the growth and maturation of lipid droplets which are storage organelles at the center of lipid and energy homeostasis. This chain is Phosphatidate cytidylyltransferase 2 (CDS2), found in Bos taurus (Bovine).